The chain runs to 173 residues: Nicotinamide-nucleotide adenylyltransferase (173 aa).

This sequence belongs to the archaeal NMN adenylyltransferase family.

The protein localises to the cytoplasm. It carries out the reaction beta-nicotinamide D-ribonucleotide + ATP + H(+) = diphosphate + NAD(+). Its pathway is cofactor biosynthesis; NAD(+) biosynthesis; NAD(+) from nicotinamide D-ribonucleotide: step 1/1. The polypeptide is Nicotinamide-nucleotide adenylyltransferase (Methanosarcina acetivorans (strain ATCC 35395 / DSM 2834 / JCM 12185 / C2A)).